Here is an 88-residue protein sequence, read N- to C-terminus: Homeobox protein knotted-1-like 2 (88 aa).

The 21-residue stretch at 4 to 24 (ELKHELKQGYRDKLVDIREEI) folds into the ELK domain. Positions 25 to 88 (LRKRRAGKLP…NQRKRNWHNN (64 aa)) form a DNA-binding region, homeobox; TALE-type.

Belongs to the TALE/KNOX homeobox family. Expressed in all tissues examined. Highest expression in leaves.

The protein resides in the nucleus. This chain is Homeobox protein knotted-1-like 2 (KNOX2), found in Zea mays (Maize).